Here is a 374-residue protein sequence, read N- to C-terminus: MKYLLPSTAAGLLLLAAQPTMAANTGGYATTDGGNVAGAVNKTARSMQDIIDIIEEAKLDSKGKKVKGGAYPLIITYNGNEDALIKAAENNICGQWSKDARGVEIKEFTKGVTIIGTNGSSANFGIWLTKSSDVIIRNMRFGYMPGGAQDGDAIRIDNTPNVWIDHNEIFAKNFECQGTKDGDTTFESAIDIKKASTNVTVSYNYIHGIKKVGLSGFSSSDTGRDLTYHHNIYDDVNARLPLQRGGQVHAYNNLYTGITSSGLNVRQKGIALIERNWFENAKNPVTSRYDGSNFGTWELRNNNIMSPADFAKYNITWDKDTKAYVNAEDWKSTGTFASVPYSYSPVSPQCVKDKLANYAGVNKNLAVLTAANCN.

The first 22 residues, 1–22 (MKYLLPSTAAGLLLLAAQPTMA), serve as a signal peptide directing secretion. An intrachain disulfide couples Cys93 to Cys176. 4 residues coordinate Ca(2+): Asp150, Asp152, Glu187, and Asp191. Residue Arg239 is part of the active site. A disulfide bridge links Cys350 with Cys373.

The protein belongs to the polysaccharide lyase 1 family. PLADES subfamily. Ca(2+) is required as a cofactor.

Its subcellular location is the secreted. The catalysed reaction is Eliminative cleavage of (1-&gt;4)-alpha-D-galacturonan to give oligosaccharides with 4-deoxy-alpha-D-galact-4-enuronosyl groups at their non-reducing ends.. Its pathway is glycan metabolism; pectin degradation; 2-dehydro-3-deoxy-D-gluconate from pectin: step 2/5. Its function is as follows. Involved in maceration and soft-rotting of plant tissue. This chain is Pectate lyase 3 (pel3), found in Pectobacterium atrosepticum (strain SCRI 1043 / ATCC BAA-672) (Erwinia carotovora subsp. atroseptica).